Consider the following 144-residue polypeptide: MTINLIAVGKLEKDFQKLFDEYAKRIFVFSKFNLIEIKENTLKNLEVKKEKETLEILSKIPKNSTVFLLSIKGKNYSSEEFSKLITNDANITFVIGGSNGVIESYFENKISFSKLTFPHQLFRVILIEQIYRAFTIKNNLKYHK.

S-adenosyl-L-methionine contacts are provided by residues leucine 68, glycine 96, and 112 to 117 (FSKLTF).

The protein belongs to the RNA methyltransferase RlmH family. In terms of assembly, homodimer.

The protein localises to the cytoplasm. It carries out the reaction pseudouridine(1915) in 23S rRNA + S-adenosyl-L-methionine = N(3)-methylpseudouridine(1915) in 23S rRNA + S-adenosyl-L-homocysteine + H(+). In terms of biological role, specifically methylates the pseudouridine at position 1915 (m3Psi1915) in 23S rRNA. This chain is Ribosomal RNA large subunit methyltransferase H, found in Mycoplasmopsis synoviae (strain 53) (Mycoplasma synoviae).